A 130-amino-acid polypeptide reads, in one-letter code: Protein ApaG (130 aa).

The region spanning 3-127 (RATTRKIQVT…FSLDVPHMAR (125 aa)) is the ApaG domain.

The protein is Protein ApaG of Azorhizobium caulinodans (strain ATCC 43989 / DSM 5975 / JCM 20966 / LMG 6465 / NBRC 14845 / NCIMB 13405 / ORS 571).